Reading from the N-terminus, the 259-residue chain is Acetylglutamate kinase (259 aa).

Substrate is bound by residues 45 to 46, Arg-67, and Asn-159; that span reads GG.

The protein belongs to the acetylglutamate kinase family. ArgB subfamily.

Its subcellular location is the cytoplasm. The enzyme catalyses N-acetyl-L-glutamate + ATP = N-acetyl-L-glutamyl 5-phosphate + ADP. It functions in the pathway amino-acid biosynthesis; L-arginine biosynthesis; N(2)-acetyl-L-ornithine from L-glutamate: step 2/4. Catalyzes the ATP-dependent phosphorylation of N-acetyl-L-glutamate. In Aeromonas hydrophila subsp. hydrophila (strain ATCC 7966 / DSM 30187 / BCRC 13018 / CCUG 14551 / JCM 1027 / KCTC 2358 / NCIMB 9240 / NCTC 8049), this protein is Acetylglutamate kinase.